Consider the following 184-residue polypeptide: Photosystem I assembly protein Ycf4 (184 aa).

A run of 2 helical transmembrane segments spans residues 22–42 (FFWACILFLGSLGFLLVGTSS) and 57–77 (IPFFPQGIVMSFYGIAGLFIS).

Belongs to the Ycf4 family.

Its subcellular location is the plastid. The protein localises to the chloroplast thylakoid membrane. Functionally, seems to be required for the assembly of the photosystem I complex. This Ceratophyllum demersum (Rigid hornwort) protein is Photosystem I assembly protein Ycf4.